A 198-amino-acid chain; its full sequence is Small ribosomal subunit protein uS5 (198 aa).

One can recognise an S5 DRBM domain in the interval 46–109; that stretch reads LEDDVLEISM…NNAKLNIFKV (64 aa).

It belongs to the universal ribosomal protein uS5 family. In terms of assembly, part of the 30S ribosomal subunit. Contacts protein S4.

Functionally, with S4 and S12 plays an important role in translational accuracy. The sequence is that of Small ribosomal subunit protein uS5 from Archaeoglobus fulgidus (strain ATCC 49558 / DSM 4304 / JCM 9628 / NBRC 100126 / VC-16).